We begin with the raw amino-acid sequence, 425 residues long: Enolase (425 aa).

Gln-163 lines the (2R)-2-phosphoglycerate pocket. The active-site Proton donor is Glu-205. Residues Asp-242, Glu-286, and Asp-313 each coordinate Mg(2+). (2R)-2-phosphoglycerate is bound by residues Lys-338, Arg-367, Ser-368, and Lys-389. Lys-338 functions as the Proton acceptor in the catalytic mechanism.

The protein belongs to the enolase family. Mg(2+) is required as a cofactor.

It is found in the cytoplasm. The protein localises to the secreted. It localises to the cell surface. It catalyses the reaction (2R)-2-phosphoglycerate = phosphoenolpyruvate + H2O. It functions in the pathway carbohydrate degradation; glycolysis; pyruvate from D-glyceraldehyde 3-phosphate: step 4/5. Its function is as follows. Catalyzes the reversible conversion of 2-phosphoglycerate (2-PG) into phosphoenolpyruvate (PEP). It is essential for the degradation of carbohydrates via glycolysis. The sequence is that of Enolase from Helicobacter hepaticus (strain ATCC 51449 / 3B1).